Here is a 788-residue protein sequence, read N- to C-terminus: MFIDKVTNKVNKSVDKTVLKTISKAKEYLSKGGLSLALSANKYEKLVPYNLWYNHELYQITNYTQNNQNMRIRFYNEIMLSPIVSYNEHDLSKIKTLVPNMSLYQPFYPETFYSVWEFLQSEYINQNAMNFLFIGKENKLGSVESLMIYNELYKNNYLNNTYTVWISDNESHDIFSNSYLLKLPKHNYLKQAFKINFLTNTNQLNVYDTIIIDAISQFDDIFDWSKEETDLHANLFYLFTSLKHLKKNTGSILFKFSMMSSQSWFYLFDILFGCFKEYEFFRPKCINPFNSEIYLYLNKFTGNIPKNNILNSILTNLYRQNVTKLFHLNLHHIDINPIFQKYLISRNKWIDNIIDYIDESPQQNNVCYVTKWHNKNNLLQIKDTTNYLDQNNDKYKLSNNSHPKIKSISHNFLLDNNHFKNLLQKRASLNFYKRVMDTRPSRIFLDMSMVHDFSNEYYVTWDYITGTLDFYKNIKNDLKKQYNGEMITTAWIKLYEILNEFPDIIPKKESVKSFHLCEAPGAFVSATHHYMYSLGCELDWYAQTLNPMYENKALDDHYGLMSLYPDKWLFGSKNNNTGDITSSEIIKSYASNKQLSNIDFMTGDAGIYCRPNCLNEQETVMAKINMGQIVCILACLSKGRSAVFKTFLPLTEPLNISLLNLLSSIFEELIFYKPGASNGSNSEIYIVLKSYKGISSSELEMLYLMLDDPKITSTSFITDVICKNFFRSYIKIVSNLIDKQINCLQRNFYYYYNIGELYDLKKNNIYSEYYDEWFNKNKVVYLENTLFS.

Residues 485-693 (EMITTAWIKL…IYIVLKSYKG (209 aa)) enclose the Adrift-type SAM-dependent 2'-O-MTase domain. The S-adenosyl-L-methionine site is built by G521 and D604. The Proton acceptor role is filled by K645.

This is an uncharacterized protein from Acanthamoeba polyphaga (Amoeba).